Consider the following 261-residue polypeptide: Carbonic anhydrase 1 (261 aa).

The residue at position 2 (Ala2) is an N-acetylalanine. The 258-residue stretch at 4–261 (ADWGYGSENG…LKGRTVRASF (258 aa)) folds into the Alpha-carbonic anhydrase domain. The Proton donor/acceptor role is filled by His65. Zn(2+) contacts are provided by His95, His97, and His120. Residues Thr200 and 200–201 (TH) each bind substrate. The interval 239–261 (AVPVLSNHRPPQPLKGRTVRASF) is disordered.

It belongs to the alpha-carbonic anhydrase family. It depends on Zn(2+) as a cofactor.

It localises to the cytoplasm. The catalysed reaction is hydrogencarbonate + H(+) = CO2 + H2O. The enzyme catalyses urea = cyanamide + H2O. Its activity is regulated as follows. Inhibited by acetazolamide. Catalyzes the reversible hydration of carbon dioxide. Can hydrate cyanamide to urea. The sequence is that of Carbonic anhydrase 1 (Ca1) from Mus musculus (Mouse).